Consider the following 475-residue polypeptide: Sulfate adenylyltransferase subunit 1 (475 aa).

In terms of domain architecture, tr-type G spans 25-240; the sequence is KSLLRFLTCG…VLETVEVINL (216 aa). The segment at 34 to 41 is G1; sequence GSVDDGKS. 34-41 is a binding site for GTP; that stretch reads GSVDDGKS. The segment at 92–96 is G2; it reads GITID. The interval 113-116 is G3; that stretch reads DTPG. Residues 113–117 and 168–171 each bind GTP; these read DTPGH and NKMD. A G4 region spans residues 168–171; sequence NKMD. A G5 region spans residues 206–208; sequence SAL.

The protein belongs to the TRAFAC class translation factor GTPase superfamily. Classic translation factor GTPase family. CysN/NodQ subfamily. Heterodimer composed of CysD, the smaller subunit, and CysN.

It carries out the reaction sulfate + ATP + H(+) = adenosine 5'-phosphosulfate + diphosphate. The protein operates within sulfur metabolism; hydrogen sulfide biosynthesis; sulfite from sulfate: step 1/3. Its function is as follows. With CysD forms the ATP sulfurylase (ATPS) that catalyzes the adenylation of sulfate producing adenosine 5'-phosphosulfate (APS) and diphosphate, the first enzymatic step in sulfur assimilation pathway. APS synthesis involves the formation of a high-energy phosphoric-sulfuric acid anhydride bond driven by GTP hydrolysis by CysN coupled to ATP hydrolysis by CysD. The protein is Sulfate adenylyltransferase subunit 1 of Sodalis glossinidius (strain morsitans).